A 127-amino-acid chain; its full sequence is Modulator protein MzrA (127 aa).

The Cytoplasmic portion of the chain corresponds to 1–10; it reads MLKPRITARQ. The chain crosses the membrane as a helical span at residues 11 to 31; sequence LIWISAFLLMLTILMMTWSTL. The Periplasmic segment spans residues 32–127; that stretch reads RQQESTLAIR…RLRESSHRFG (96 aa).

The protein belongs to the MzrA family. In terms of assembly, interacts with EnvZ.

The protein localises to the cell inner membrane. In terms of biological role, modulates the activity of the EnvZ/OmpR two-component regulatory system, probably by directly modulating EnvZ enzymatic activity and increasing stability of phosphorylated OmpR. The polypeptide is Modulator protein MzrA (Salmonella agona (strain SL483)).